The sequence spans 130 residues: Small ribosomal subunit protein uS11 (130 aa).

The segment at 111 to 130 (IRDVTPVPHNGSRPPKRRRA) is disordered.

The protein belongs to the universal ribosomal protein uS11 family. In terms of assembly, part of the 30S ribosomal subunit. Interacts with proteins S7 and S18. Binds to IF-3.

Its function is as follows. Located on the platform of the 30S subunit, it bridges several disparate RNA helices of the 16S rRNA. Forms part of the Shine-Dalgarno cleft in the 70S ribosome. The chain is Small ribosomal subunit protein uS11 from Lactobacillus acidophilus (strain ATCC 700396 / NCK56 / N2 / NCFM).